Consider the following 269-residue polypeptide: Spermatogenesis-associated serine-rich protein 1 (269 aa).

Residues Met-1 to Glu-14 show a composition bias toward basic and acidic residues. Residues Met-1–Lys-92 form a disordered region. Over residues Cys-18–Gly-38 the composition is skewed to polar residues. At Thr-54 the chain carries Phosphothreonine. A compositionally biased stretch (low complexity) spans Ser-67–Ser-86. Ser-72, Ser-75, and Ser-82 each carry phosphoserine.

The sequence is that of Spermatogenesis-associated serine-rich protein 1 (Spats1) from Mus musculus (Mouse).